A 268-amino-acid chain; its full sequence is Hemin import ATP-binding protein HmuV (268 aa).

Residues 5 to 242 (IEARHLSKRA…ETIRDIFEID (238 aa)) enclose the ABC transporter domain. 37–44 (GPNGAGKS) contributes to the ATP binding site.

Belongs to the ABC transporter superfamily. Heme (hemin) importer (TC 3.A.1.14.5) family. In terms of assembly, the complex is composed of two ATP-binding proteins (HmuV), two transmembrane proteins (HmuU) and a solute-binding protein (HmuT).

The protein localises to the cell inner membrane. Part of the ABC transporter complex HmuTUV involved in hemin import. Responsible for energy coupling to the transport system. In Bradyrhizobium diazoefficiens (strain JCM 10833 / BCRC 13528 / IAM 13628 / NBRC 14792 / USDA 110), this protein is Hemin import ATP-binding protein HmuV.